Reading from the N-terminus, the 88-residue chain is Small ribosomal subunit protein bS16 (88 aa).

It belongs to the bacterial ribosomal protein bS16 family.

The polypeptide is Small ribosomal subunit protein bS16 (Pelotomaculum thermopropionicum (strain DSM 13744 / JCM 10971 / SI)).